Consider the following 697-residue polypeptide: DNA ligase (697 aa).

Residues 44–48 (DGEFD), 93–94 (SL), and Glu-123 each bind NAD(+). Lys-125 serves as the catalytic N6-AMP-lysine intermediate. 4 residues coordinate NAD(+): Arg-146, Glu-186, Lys-302, and Lys-326. Zn(2+)-binding residues include Cys-420, Cys-423, Cys-439, and Cys-445. One can recognise a BRCT domain in the interval 609 to 697 (SIPRNLEGLS…GPDAVTDSGV (89 aa)).

This sequence belongs to the NAD-dependent DNA ligase family. LigA subfamily. The cofactor is Mg(2+). Mn(2+) serves as cofactor.

It carries out the reaction NAD(+) + (deoxyribonucleotide)n-3'-hydroxyl + 5'-phospho-(deoxyribonucleotide)m = (deoxyribonucleotide)n+m + AMP + beta-nicotinamide D-nucleotide.. Its function is as follows. DNA ligase that catalyzes the formation of phosphodiester linkages between 5'-phosphoryl and 3'-hydroxyl groups in double-stranded DNA using NAD as a coenzyme and as the energy source for the reaction. It is essential for DNA replication and repair of damaged DNA. This is DNA ligase from Rhodococcus opacus (strain B4).